A 165-amino-acid polypeptide reads, in one-letter code: Probable RNA-binding protein EIF1AD (165 aa).

The region spanning 5 to 89 is the S1-like domain; the sequence is TKRKHVVKEV…VKAEISFVLC (85 aa). Positions 6–12 match the Nuclear localization signal motif; it reads KRKHVVK. Thr-33 bears the Phosphothreonine mark. The Nuclear localization signal signature appears at 56–65; that stretch reads KYRKNIWIKR. The segment at 112-165 is disordered; sequence KHNNRNRQTQPELPAEPQLSGEESSSEDDSDLFVNTNRRQYHESEEESEEEEAA. Phosphoserine is present on residues Ser-131, Ser-135, Ser-136, Ser-137, Ser-155, and Ser-159. The segment covering 155–165 has biased composition (acidic residues); the sequence is SEEESEEEEAA.

It belongs to the EIF1AD family. Interacts with GAPDH and STAT1.

The protein resides in the nucleus. Plays a role into cellular response to oxidative stress. Decreases cell proliferation. This Macaca fascicularis (Crab-eating macaque) protein is Probable RNA-binding protein EIF1AD (EIF1AD).